The following is a 385-amino-acid chain: Deoxyguanosinetriphosphate triphosphohydrolase-like protein (385 aa).

Residues 75 to 204 form the HD domain; sequence RLTHSLEVAQ…INFADEIAYN (130 aa).

It belongs to the dGTPase family. Type 2 subfamily.

The sequence is that of Deoxyguanosinetriphosphate triphosphohydrolase-like protein from Geobacter sulfurreducens (strain ATCC 51573 / DSM 12127 / PCA).